Reading from the N-terminus, the 317-residue chain is 4-hydroxy-3-methylbut-2-enyl diphosphate reductase (317 aa).

[4Fe-4S] cluster is bound at residue Cys-12. Positions 41 and 74 each coordinate (2E)-4-hydroxy-3-methylbut-2-enyl diphosphate. Dimethylallyl diphosphate-binding residues include His-41 and His-74. 2 residues coordinate isopentenyl diphosphate: His-41 and His-74. Cys-97 provides a ligand contact to [4Fe-4S] cluster. A (2E)-4-hydroxy-3-methylbut-2-enyl diphosphate-binding site is contributed by His-125. Residue His-125 coordinates dimethylallyl diphosphate. Isopentenyl diphosphate is bound at residue His-125. The active-site Proton donor is the Glu-127. Position 168 (Thr-168) interacts with (2E)-4-hydroxy-3-methylbut-2-enyl diphosphate. Cys-198 serves as a coordination point for [4Fe-4S] cluster. (2E)-4-hydroxy-3-methylbut-2-enyl diphosphate-binding residues include Ser-226, Ser-227, Asn-228, and Ser-270. Ser-226, Ser-227, Asn-228, and Ser-270 together coordinate dimethylallyl diphosphate. Isopentenyl diphosphate contacts are provided by Ser-226, Ser-227, Asn-228, and Ser-270.

The protein belongs to the IspH family. As to quaternary structure, homodimer. The cofactor is [4Fe-4S] cluster.

The enzyme catalyses isopentenyl diphosphate + 2 oxidized [2Fe-2S]-[ferredoxin] + H2O = (2E)-4-hydroxy-3-methylbut-2-enyl diphosphate + 2 reduced [2Fe-2S]-[ferredoxin] + 2 H(+). The catalysed reaction is dimethylallyl diphosphate + 2 oxidized [2Fe-2S]-[ferredoxin] + H2O = (2E)-4-hydroxy-3-methylbut-2-enyl diphosphate + 2 reduced [2Fe-2S]-[ferredoxin] + 2 H(+). It participates in isoprenoid biosynthesis; dimethylallyl diphosphate biosynthesis; dimethylallyl diphosphate from (2E)-4-hydroxy-3-methylbutenyl diphosphate: step 1/1. The protein operates within isoprenoid biosynthesis; isopentenyl diphosphate biosynthesis via DXP pathway; isopentenyl diphosphate from 1-deoxy-D-xylulose 5-phosphate: step 6/6. Catalyzes the conversion of 1-hydroxy-2-methyl-2-(E)-butenyl 4-diphosphate (HMBPP) into a mixture of isopentenyl diphosphate (IPP) and dimethylallyl diphosphate (DMAPP). Acts in the terminal step of the DOXP/MEP pathway for isoprenoid precursor biosynthesis. This chain is 4-hydroxy-3-methylbut-2-enyl diphosphate reductase, found in Yersinia pseudotuberculosis serotype O:1b (strain IP 31758).